Reading from the N-terminus, the 188-residue chain is Anaphase-promoting complex subunit 10 (188 aa).

In terms of domain architecture, DOC spans 4 to 187; it reads NSNINSNSRL…SPEVSMFQTL (184 aa).

Belongs to the APC10 family. The APC/C is composed of at least 13 subunits that stay tightly associated throughout the cell cycle: anapc1, anapc2, anapc3, anapc4, anapc5, anapc6, anapc7, anapc8, anapc10, anapc11, cdc20, cdc26 and cdh1.

It is found in the nucleus. The protein operates within protein modification; protein ubiquitination. In terms of biological role, component of the anaphase promoting complex/cyclosome (APC/C), a cell cycle-regulated E3 ubiquitin-protein ligase complex that controls progression through mitosis and the G1 phase of the cell cycle. This chain is Anaphase-promoting complex subunit 10 (anapc10), found in Dictyostelium discoideum (Social amoeba).